Reading from the N-terminus, the 104-residue chain is Large ribosomal subunit protein uL24 (104 aa).

It belongs to the universal ribosomal protein uL24 family. Part of the 50S ribosomal subunit.

One of two assembly initiator proteins, it binds directly to the 5'-end of the 23S rRNA, where it nucleates assembly of the 50S subunit. Its function is as follows. One of the proteins that surrounds the polypeptide exit tunnel on the outside of the subunit. The chain is Large ribosomal subunit protein uL24 from Ectopseudomonas mendocina (strain ymp) (Pseudomonas mendocina).